Reading from the N-terminus, the 315-residue chain is Ribosomal RNA small subunit methyltransferase H (315 aa).

Residues 1-21 (MNVVNVVPMHLPPPPPRPRGE) are disordered. S-adenosyl-L-methionine contacts are provided by residues 51–53 (GGH), D69, F96, D117, and Q124. The interval 281 to 315 (KKPVTAGDDEVEGNPRARSAKLRAARRVGGAEALA) is disordered.

Belongs to the methyltransferase superfamily. RsmH family.

Its subcellular location is the cytoplasm. It carries out the reaction cytidine(1402) in 16S rRNA + S-adenosyl-L-methionine = N(4)-methylcytidine(1402) in 16S rRNA + S-adenosyl-L-homocysteine + H(+). Its function is as follows. Specifically methylates the N4 position of cytidine in position 1402 (C1402) of 16S rRNA. In Sorangium cellulosum (strain So ce56) (Polyangium cellulosum (strain So ce56)), this protein is Ribosomal RNA small subunit methyltransferase H.